A 380-amino-acid chain; its full sequence is Probable cytosolic iron-sulfur protein assembly protein 1 (380 aa).

7 WD repeats span residues 10–49 (AHND…KFPL), 56–108 (THKR…VEYD), 135–175 (GHEN…EEFE), 182–221 (DHSQ…DEWS), 228–275 (GHEG…EEDK), 299–338 (VHKY…KWVI), and 346–380 (HGVH…LWNV).

Belongs to the WD repeat CIA1 family. Interacts with NAR1.

The protein resides in the cytoplasm. It localises to the nucleus. In terms of biological role, essential component of the cytosolic iron-sulfur (Fe/S) protein assembly machinery. Required for the maturation of extramitochondrial Fe/S proteins. This Candida dubliniensis (strain CD36 / ATCC MYA-646 / CBS 7987 / NCPF 3949 / NRRL Y-17841) (Yeast) protein is Probable cytosolic iron-sulfur protein assembly protein 1.